The primary structure comprises 365 residues: MELLLRFLLLCGVADFTRGLSITTPEQMIEKAKGETAYLPCKFTLGPEDQGPLDIEWLLSPADNQKVDQVIILYSGDKIYDDYYQDLKGRVHFTSNDLKSGDASINVTNLQLSDIGTYQCKVKKAPGVGNKKIQLTVLVKPSGIRCYVDGSEEIGNDFKLKCEPKEGSLPLRYEWQKLSDSQKLPTSWLPEMTSPVISVKNASAEYSGTYTCTVRNRVGSDQCLLRLDVVPPSNRAGTIAGAVIGTLLALVLIALIVFCCHKKRREEKYEKEVHHDIREDVPPPKSRTSTARSYIGSNHSSLGSMSPSNMEGYSKTQYNQVPSEDLERAPQSPTLPPAKVAAPNLSRMGAVPVMIPAQSKDGSIV.

Residues 1-19 (MELLLRFLLLCGVADFTRG) form the signal peptide. 2 Ig-like C2-type domains span residues 20-136 (LSIT…IQLT) and 141-228 (PSGI…LRLD). Over 20–238 (LSITTPEQMI…VVPPSNRAGT (219 aa)) the chain is Extracellular. Disulfide bonds link cysteine 41–cysteine 120, cysteine 146–cysteine 223, and cysteine 162–cysteine 212. Asparagine 106 carries an N-linked (GlcNAc...) asparagine glycan. Residues 239–259 (IAGAVIGTLLALVLIALIVFC) traverse the membrane as a helical segment. Residues cysteine 259 and cysteine 260 are each lipidated (S-palmitoyl cysteine). The Cytoplasmic portion of the chain corresponds to 260 to 365 (CHKKRREEKY…PAQSKDGSIV (106 aa)). Residues 269–282 (YEKEVHHDIREDVP) are compositionally biased toward basic and acidic residues. Residues 269–343 (YEKEVHHDIR…TLPPAKVAAP (75 aa)) are disordered. The segment covering 286–322 (SRTSTARSYIGSNHSSLGSMSPSNMEGYSKTQYNQVP) has biased composition (polar residues). Residues serine 297, serine 304, serine 306, serine 323, serine 332, and serine 363 each carry the phosphoserine modification. Positions 360-365 (KDGSIV) match the PDZ-binding motif.

Monomer. May form homodimers. Interacts with LNX, MAGI1, DLG4, PRKCABP, TJP1 and CTNNB1. Interacts with MPDZ; recruits MPDZ to intercellular contact sites. Interacts with JAML (homodimeric form). Post-translationally, N-glycosylated. In terms of processing, palmitoylated on Cys-259 and/or Cys-260; required for proper localization to the plasma membrane.

The protein localises to the cell membrane. It localises to the basolateral cell membrane. The protein resides in the cell junction. It is found in the tight junction. Its subcellular location is the adherens junction. In terms of biological role, component of the epithelial apical junction complex that may function as a homophilic cell adhesion molecule and is essential for tight junction integrity. Also involved in transepithelial migration of leukocytes through adhesive interactions with JAML a transmembrane protein of the plasma membrane of leukocytes. The interaction between both receptors also mediates the activation of gamma-delta T-cells, a subpopulation of T-cells residing in epithelia and involved in tissue homeostasis and repair. Upon epithelial CXADR-binding, JAML induces downstream cell signaling events in gamma-delta T-cells through PI3-kinase and MAP kinases. It results in proliferation and production of cytokines and growth factors by T-cells that in turn stimulate epithelial tissues repair. The polypeptide is Coxsackievirus and adenovirus receptor homolog (CXADR) (Bos taurus (Bovine)).